We begin with the raw amino-acid sequence, 676 residues long: MGKTRRNRVRNRTDPIAKPVKPPTDPELAKLREDKILPVLKDLKSPDAKSRTTAAGAIANIVQDAKCRKLLLREQVVHIVLTETLTDNNIDSRAAGWEILKVLAQEEEADFCVHLYRLDVLTAIEHAAKAVLETLTTSEPPFSKLLKAQQRLVWDITGSLLVLIGLLALARDEIHEAVATKQTILRLLFRLISADIAPQDIYEEAISCLTTLSEDNLKVGQAITDDQETHVYDVLLKLATGTDPRAVMACGVLHNVFTSLQWMDHSPGKDGACDAILIPTLTRALEHVVPGGAKFNGDARYANITLLALVTLASIGTDFQETLVKGNQGSRESPISAADEEWNGFDDADGDAMDVDQKSSSGEDQEEDYEEIDVKEDDEDDDDDSITSEMQADMERVVGADGTDDGDLEDLPTLRELIQTAVPQLIRLSNLPIDSDESLTIQSHALSALNNISWTISCLEFANGENANIHNAWYPTAKKIWRKTILPILEADSADLKLATQVTSLAWAVARVLHGETPTDGNPHRKFISLYHSSKQQAGGNSNSIEEPEDPFQGLGVKCIGVVGSLAHDPAPIEVNREVGVFLVTLLRQSNNVPPAEIVEALNQLFDIYGDEELACDKEVFWKDGFLKHLEEFLPKMRTLTKGIDKRTQPELRTRADEALLNLGRFVQYKKKHAPK.

Basic residues predominate over residues 1–10 (MGKTRRNRVR). A disordered region spans residues 1–28 (MGKTRRNRVRNRTDPIAKPVKPPTDPEL). The stretch at 183–216 (TILRLLFRLISADIAPQDIYEEAISCLTTLSEDN) is one ARM 1 repeat. The segment at 325 to 385 (KGNQGSRESP…EDDEDDDDDS (61 aa)) is disordered. 2 stretches are compositionally biased toward acidic residues: residues 338–354 (ADEE…DAMD) and 363–385 (EDQE…DDDS). One copy of the ARM 2 repeat lies at 420–453 (TAVPQLIRLSNLPIDSDESLTIQSHALSALNNIS).

The protein belongs to the nuclear import and ribosome assembly adapter family. In terms of assembly, component of a hexameric 5S RNP precursor complex, composed of 5S RNA, RRS1, RPF2, RPL5, RPL11 and SYO1; this complex acts as a precursor for ribosome assembly.

In terms of biological role, involved in ribosomal large subunit assembly. This is Symportin 1 from Chaetomium thermophilum (strain DSM 1495 / CBS 144.50 / IMI 039719) (Thermochaetoides thermophila).